The primary structure comprises 217 residues: Octanoyltransferase (217 aa).

A BPL/LPL catalytic domain is found at 32–207 (SDSPDELWIV…TLSQLLGYQQ (176 aa)). Residues 71–78 (RGGQVTYH), 138–140 (SLG), and 151–153 (GLA) contribute to the substrate site. Cys-169 (acyl-thioester intermediate) is an active-site residue.

The protein belongs to the LipB family.

It localises to the cytoplasm. It catalyses the reaction octanoyl-[ACP] + L-lysyl-[protein] = N(6)-octanoyl-L-lysyl-[protein] + holo-[ACP] + H(+). The protein operates within protein modification; protein lipoylation via endogenous pathway; protein N(6)-(lipoyl)lysine from octanoyl-[acyl-carrier-protein]: step 1/2. Functionally, catalyzes the transfer of endogenously produced octanoic acid from octanoyl-acyl-carrier-protein onto the lipoyl domains of lipoate-dependent enzymes. Lipoyl-ACP can also act as a substrate although octanoyl-ACP is likely to be the physiological substrate. The chain is Octanoyltransferase from Shewanella sp. (strain ANA-3).